We begin with the raw amino-acid sequence, 334 residues long: Beta-hexosaminidase (334 aa).

Substrate-binding positions include D57, R65, R128, and 158-159; that span reads KH. The active-site Proton donor/acceptor is the H171. The Nucleophile role is filled by D242.

It belongs to the glycosyl hydrolase 3 family. NagZ subfamily.

It localises to the cytoplasm. The enzyme catalyses Hydrolysis of terminal non-reducing N-acetyl-D-hexosamine residues in N-acetyl-beta-D-hexosaminides.. It functions in the pathway cell wall biogenesis; peptidoglycan recycling. In terms of biological role, plays a role in peptidoglycan recycling by cleaving the terminal beta-1,4-linked N-acetylglucosamine (GlcNAc) from peptide-linked peptidoglycan fragments, giving rise to free GlcNAc, anhydro-N-acetylmuramic acid and anhydro-N-acetylmuramic acid-linked peptides. The protein is Beta-hexosaminidase of Methylococcus capsulatus (strain ATCC 33009 / NCIMB 11132 / Bath).